A 135-amino-acid polypeptide reads, in one-letter code: Fatty acid-binding protein 5 (135 aa).

The residue at position 2 (alanine 2) is an N-acetylalanine. Lysine 17 carries the N6-acetyllysine modification. Tyrosine 22 bears the Phosphotyrosine; by Tyr-kinases mark. Residues 24 to 34 (KEVGVGMALRK) carry the Nuclear localization signal motif. Cysteine 43 and arginine 109 together coordinate N-eicosanoyl ethanolamine. Residues cysteine 120 and cysteine 127 are joined by a disulfide bond. Position 129-131 (129-131 (RVY)) interacts with (9Z,12Z)-octadecadienoate. An N-eicosanoyl ethanolamine-binding site is contributed by tyrosine 131. Tyrosine 131 lines the hexadecanoate pocket. Position 131 is a phosphotyrosine (tyrosine 131).

The protein belongs to the calycin superfamily. Fatty-acid binding protein (FABP) family. In terms of assembly, monomer. In terms of tissue distribution, most abundant in lens and retina (found in the mueller cells), moderately abundant in heart and testis (found in the Sertoli cells), and present in very low amounts in lung.

Its subcellular location is the cytoplasm. The protein resides in the nucleus. It localises to the synapse. It is found in the postsynaptic density. The protein localises to the secreted. It carries out the reaction hexadecanoate(out) = hexadecanoate(in). The enzyme catalyses (9Z,12Z)-octadecadienoate(out) = (9Z,12Z)-octadecadienoate(in). The catalysed reaction is (9Z)-octadecenoate(out) = (9Z)-octadecenoate(in). Functionally, intracellular carrier for long-chain fatty acids and related active lipids, such as endocannabinoids, that regulate the metabolism and actions of the ligands they bind. In addition to the cytosolic transport, selectively delivers specific fatty acids from the cytosol to the nucleus, wherein they activate nuclear receptors. Delivers retinoic acid to the nuclear receptor peroxisome proliferator-activated receptor delta; which promotes proliferation and survival. May also serve as a synaptic carrier of endocannabinoid at central synapses and thus controls retrograde endocannabinoid signaling. Modulates inflammation by regulating PTGES induction via NF-kappa-B activation, and prostaglandin E2 (PGE2) biosynthesis during inflammation. In Bos taurus (Bovine), this protein is Fatty acid-binding protein 5 (FABP5).